A 95-amino-acid chain; its full sequence is MVSLIEKNQLDSFIEKNPSWIIDNKTIKKEFKFENFIEAFGFMSKVALLSEKIDHHPDWQNIYNKVKINLTTHDKGGITTNDIKLAEAIDKLINS.

This sequence belongs to the pterin-4-alpha-carbinolamine dehydratase family.

It catalyses the reaction (4aS,6R)-4a-hydroxy-L-erythro-5,6,7,8-tetrahydrobiopterin = (6R)-L-erythro-6,7-dihydrobiopterin + H2O. The polypeptide is Putative pterin-4-alpha-carbinolamine dehydratase (Prochlorococcus marinus (strain NATL2A)).